Consider the following 266-residue polypeptide: GTP cyclohydrolase MptA (266 aa).

The protein belongs to the GTP cyclohydrolase IV family. In terms of assembly, homodimer. Fe(2+) is required as a cofactor.

It carries out the reaction GTP + H2O = 7,8-dihydroneopterin 2',3'-cyclic phosphate + formate + diphosphate + H(+). It participates in cofactor biosynthesis; 5,6,7,8-tetrahydromethanopterin biosynthesis. Converts GTP to 7,8-dihydro-D-neopterin 2',3'-cyclic phosphate, the first intermediate in the biosynthesis of coenzyme methanopterin. The protein is GTP cyclohydrolase MptA of Pyrococcus abyssi (strain GE5 / Orsay).